The primary structure comprises 351 residues: Protein-glutamate methylesterase/protein-glutamine glutaminase 2 (351 aa).

In terms of domain architecture, Response regulatory spans 5-122 (RVICVDDSAL…RDGLLDYSEL (118 aa)). Residue aspartate 56 is modified to 4-aspartylphosphate. Positions 154–341 (LNSSEKLVIL…PLPAMSERIL (188 aa)) constitute a CheB-type methylesterase domain. Catalysis depends on residues serine 166, histidine 192, and aspartate 289.

This sequence belongs to the CheB family. Post-translationally, phosphorylated by CheA. Phosphorylation of the N-terminal regulatory domain activates the methylesterase activity.

It is found in the cytoplasm. It carries out the reaction [protein]-L-glutamate 5-O-methyl ester + H2O = L-glutamyl-[protein] + methanol + H(+). It catalyses the reaction L-glutaminyl-[protein] + H2O = L-glutamyl-[protein] + NH4(+). Functionally, involved in chemotaxis. Part of a chemotaxis signal transduction system that modulates chemotaxis in response to various stimuli. Catalyzes the demethylation of specific methylglutamate residues introduced into the chemoreceptors (methyl-accepting chemotaxis proteins or MCP) by CheR. Also mediates the irreversible deamidation of specific glutamine residues to glutamic acid. The polypeptide is Protein-glutamate methylesterase/protein-glutamine glutaminase 2 (Bordetella avium (strain 197N)).